A 256-amino-acid polypeptide reads, in one-letter code: Indole-3-glycerol phosphate synthase (256 aa).

The protein belongs to the TrpC family.

The enzyme catalyses 1-(2-carboxyphenylamino)-1-deoxy-D-ribulose 5-phosphate + H(+) = (1S,2R)-1-C-(indol-3-yl)glycerol 3-phosphate + CO2 + H2O. It participates in amino-acid biosynthesis; L-tryptophan biosynthesis; L-tryptophan from chorismate: step 4/5. The protein is Indole-3-glycerol phosphate synthase of Caldanaerobacter subterraneus subsp. tengcongensis (strain DSM 15242 / JCM 11007 / NBRC 100824 / MB4) (Thermoanaerobacter tengcongensis).